A 375-amino-acid chain; its full sequence is Trichodiene synthase (375 aa).

This sequence belongs to the trichodiene synthase family.

The catalysed reaction is (2E,6E)-farnesyl diphosphate = trichodiene + diphosphate. The protein operates within sesquiterpene biosynthesis; trichothecene biosynthesis. Its function is as follows. TS is a member of the terpene cyclase group of enzymes. It catalyzes the isomerization and cyclization of farnesyl pyro-phosphate to form trichodiene, the first cyclic intermediate in the biosynthetic pathway for trichothecenes. It serves to branch trichothecene biosynthesis from the isoprenoid pathway. The polypeptide is Trichodiene synthase (TRI5) (Fusarium acaciae-mearnsii).